The sequence spans 612 residues: PAN2-PAN3 deadenylation complex subunit PAN3 (612 aa).

The C3H1-type zinc-finger motif lies at 10–39 (WAKDTPCKNITIYGYCKYENDGCIFNHGKP). Low complexity predominate over residues 44–62 (SNTGGAAAGSAEDSAASGG). Residues 44-64 (SNTGGAAAGSAEDSAASGGVT) are disordered. 2 short sequence motifs (PABPC-interacting motif-2 (PAM-2)) span residues 84–104 (SVAI…IVSS) and 111–131 (TAFT…SANV). The tract at residues 231–481 (QVFPSDGNLP…TIAEFTALFS (251 aa)) is pseudokinase domain. Residues arginine 286, 336–343 (DYYPQSNS), and 389–390 (DK) each bind ATP. Positions 482–520 (HKMLDIISSSQTYSEYIEQHLSRELENGRLFRLMCKLNF) form a coiled coil. The knob domain stretch occupies residues 521–612 (IFGRMESSMD…IDSTFRSMTQ (92 aa)).

This sequence belongs to the protein kinase superfamily. PAN3 family. As to quaternary structure, homodimer. Forms a heterotrimer with a catalytic subunit PAN2 to form the poly(A)-nuclease (PAN) deadenylation complex. Interacts (via PAM-2 motif) with poly(A)-binding protein PAB1 (via PABC domain), conferring substrate specificity of the enzyme complex.

Its subcellular location is the cytoplasm. Its function is as follows. Regulatory subunit of the poly(A)-nuclease (PAN) deadenylation complex, one of two cytoplasmic mRNA deadenylases involved in mRNA turnover. PAN specifically shortens poly(A) tails of RNA and the activity is stimulated by poly(A)-binding protein PAB1. PAN deadenylation is followed by rapid degradation of the shortened mRNA tails by the CCR4-NOT complex. Deadenylated mRNAs are then degraded by two alternative mechanisms, namely exosome-mediated 3'-5' exonucleolytic degradation, or deadenylation-dependent mRNA decaping and subsequent 5'-3' exonucleolytic degradation by XRN1. May also be involved in post-transcriptional maturation of mRNA poly(A) tails. PAN3 acts as a positive regulator for PAN activity, recruiting the catalytic subunit PAN2 to mRNA via its interaction with RNA and with PAB1. This Eremothecium gossypii (strain ATCC 10895 / CBS 109.51 / FGSC 9923 / NRRL Y-1056) (Yeast) protein is PAN2-PAN3 deadenylation complex subunit PAN3.